The chain runs to 259 residues: Carbonic anhydrase 1 (259 aa).

Ala-1 carries the post-translational modification N-acetylalanine. Positions 2–258 (HAWGYGPTDG…LKGRHVRASF (257 aa)) constitute an Alpha-carbonic anhydrase domain. Catalysis depends on His-63, which acts as the Proton donor/acceptor. The Zn(2+) site is built by His-93, His-95, and His-118. Substrate contacts are provided by residues Thr-197 and 197–198 (TT).

The protein belongs to the alpha-carbonic anhydrase family. Zn(2+) is required as a cofactor.

It is found in the cytoplasm. It carries out the reaction hydrogencarbonate + H(+) = CO2 + H2O. In terms of biological role, catalyzes the reversible hydration of carbon dioxide. The polypeptide is Carbonic anhydrase 1 (ca1) (Chionodraco hamatus (Antarctic teleost icefish)).